We begin with the raw amino-acid sequence, 215 residues long: Adenylate kinase (215 aa).

ATP is bound at residue 10–15 (GCGKGT). The tract at residues 30–59 (STGDIFRQTIDQKGPYWEELKSYISKGLLV) is NMP. Residues threonine 31, arginine 36, 57–59 (LLV), and glutamine 91 contribute to the AMP site. Residues 120-157 (GRRICSKCKRIYNIHYSAPKKEDICDDDGEFLIQRKDD) form an LID region. Arginine 121 serves as a coordination point for ATP. Residues cysteine 124 and cysteine 127 each contribute to the Zn(2+) site. 130–131 (IY) is an ATP binding site. Residues cysteine 144 and aspartate 147 each coordinate Zn(2+). Arginine 154 and arginine 165 together coordinate AMP.

This sequence belongs to the adenylate kinase family. Monomer.

The protein localises to the cytoplasm. The catalysed reaction is AMP + ATP = 2 ADP. Its pathway is purine metabolism; AMP biosynthesis via salvage pathway; AMP from ADP: step 1/1. In terms of biological role, catalyzes the reversible transfer of the terminal phosphate group between ATP and AMP. Plays an important role in cellular energy homeostasis and in adenine nucleotide metabolism. This chain is Adenylate kinase, found in Malacoplasma penetrans (strain HF-2) (Mycoplasma penetrans).